Reading from the N-terminus, the 83-residue chain is Alpha-neurotoxin NTX-3 (83 aa).

The first 21 residues, 1-21 (MKTLLLTLLVVTIVCLDLGYT), serve as a signal peptide directing secretion. Disulfide bonds link cysteine 24–cysteine 45, cysteine 38–cysteine 62, cysteine 64–cysteine 75, and cysteine 76–cysteine 81.

It belongs to the three-finger toxin family. Short-chain subfamily. Type I alpha-neurotoxin sub-subfamily. As to expression, expressed by the venom gland.

Its subcellular location is the secreted. In terms of biological role, binds to muscle nicotinic acetylcholine receptor (nAChR) and inhibit acetylcholine from binding to the receptor, thereby impairing neuromuscular transmission. This Naja sputatrix (Malayan spitting cobra) protein is Alpha-neurotoxin NTX-3.